The following is a 319-amino-acid chain: Ribonucleoside-diphosphate reductase small chain (319 aa).

Residues Asp-70, Glu-101, and His-104 each contribute to the Fe cation site. Tyr-108 is a catalytic residue. Fe cation is bound by residues Glu-163, Glu-197, and His-200. The interaction with R1 stretch occupies residues 313 to 319 (FSLDVDF).

The protein belongs to the ribonucleoside diphosphate reductase small chain family. As to quaternary structure, interacts with RNR1/OPG080 subunit. Can interact with host RNR1 supunit. It depends on Fe cation as a cofactor.

The catalysed reaction is a 2'-deoxyribonucleoside 5'-diphosphate + [thioredoxin]-disulfide + H2O = a ribonucleoside 5'-diphosphate + [thioredoxin]-dithiol. Functionally, ribonucleoside-diphosphate reductase holoenzyme provides the precursors necessary for viral DNA synthesis. Allows virus growth in non-dividing cells. Catalyzes the biosynthesis of deoxyribonucleotides from the corresponding ribonucleotides. This is Ribonucleoside-diphosphate reductase small chain (OPG048) from Vaccinia virus (strain Copenhagen) (VACV).